A 231-amino-acid polypeptide reads, in one-letter code: Dihydropteridine reductase (231 aa).

NADP(+) is bound at residue leucine 6–isoleucine 30. The active-site Proton acceptor is the tyrosine 138.

The protein belongs to the short-chain dehydrogenases/reductases (SDR) family. Homodimer.

The catalysed reaction is 5,6,7,8-tetrahydropteridine + NAD(+) = 6,7-dihydropteridine + NADH + H(+). The enzyme catalyses 5,6,7,8-tetrahydropteridine + NADP(+) = 6,7-dihydropteridine + NADPH + H(+). In terms of biological role, the product of this enzyme, tetrahydrobiopterin (BH-4), is an essential cofactor for phenylalanine, tyrosine, and tryptophan hydroxylases. The polypeptide is Dihydropteridine reductase (qdpr) (Dictyostelium discoideum (Social amoeba)).